Reading from the N-terminus, the 158-residue chain is 3-hydroxyacyl-[acyl-carrier-protein] dehydratase FabZ (158 aa).

His-61 is a catalytic residue.

Belongs to the thioester dehydratase family. FabZ subfamily.

The protein resides in the cytoplasm. It catalyses the reaction a (3R)-hydroxyacyl-[ACP] = a (2E)-enoyl-[ACP] + H2O. Functionally, involved in unsaturated fatty acids biosynthesis. Catalyzes the dehydration of short chain beta-hydroxyacyl-ACPs and long chain saturated and unsaturated beta-hydroxyacyl-ACPs. The sequence is that of 3-hydroxyacyl-[acyl-carrier-protein] dehydratase FabZ from Methylobacterium radiotolerans (strain ATCC 27329 / DSM 1819 / JCM 2831 / NBRC 15690 / NCIMB 10815 / 0-1).